The primary structure comprises 342 residues: Glycerol-1-phosphate dehydrogenase [NAD(P)+] (342 aa).

NAD(+)-binding positions include 84–88 and 106–109; these read GRPID and TAAS. Residue D111 participates in substrate binding. Position 115 (S115) interacts with NAD(+). D160 lines the substrate pocket. Zn(2+) is bound by residues D160 and H241. A substrate-binding site is contributed by H245. H260 provides a ligand contact to Zn(2+).

It belongs to the glycerol-1-phosphate dehydrogenase family. In terms of assembly, homodimer. Zn(2+) serves as cofactor.

Its subcellular location is the cytoplasm. It catalyses the reaction sn-glycerol 1-phosphate + NAD(+) = dihydroxyacetone phosphate + NADH + H(+). The catalysed reaction is sn-glycerol 1-phosphate + NADP(+) = dihydroxyacetone phosphate + NADPH + H(+). It participates in membrane lipid metabolism; glycerophospholipid metabolism. Functionally, catalyzes the NAD(P)H-dependent reduction of dihydroxyacetonephosphate (DHAP or glycerone phosphate) to glycerol 1-phosphate (G1P). The G1P thus generated is used as the glycerophosphate backbone of phospholipids in the cellular membranes of Archaea. The sequence is that of Glycerol-1-phosphate dehydrogenase [NAD(P)+] from Pyrobaculum aerophilum (strain ATCC 51768 / DSM 7523 / JCM 9630 / CIP 104966 / NBRC 100827 / IM2).